A 135-amino-acid chain; its full sequence is Small ribosomal subunit protein uS9 (135 aa).

It belongs to the universal ribosomal protein uS9 family.

The sequence is that of Small ribosomal subunit protein uS9 (rps9) from Archaeoglobus fulgidus (strain ATCC 49558 / DSM 4304 / JCM 9628 / NBRC 100126 / VC-16).